The chain runs to 458 residues: ATP synthase subunit beta (458 aa).

148 to 155 (GGAGVGKT) is a binding site for ATP.

The protein belongs to the ATPase alpha/beta chains family. In terms of assembly, F-type ATPases have 2 components, CF(1) - the catalytic core - and CF(0) - the membrane proton channel. CF(1) has five subunits: alpha(3), beta(3), gamma(1), delta(1), epsilon(1). CF(0) has three main subunits: a(1), b(2) and c(9-12). The alpha and beta chains form an alternating ring which encloses part of the gamma chain. CF(1) is attached to CF(0) by a central stalk formed by the gamma and epsilon chains, while a peripheral stalk is formed by the delta and b chains.

It localises to the cell inner membrane. It carries out the reaction ATP + H2O + 4 H(+)(in) = ADP + phosphate + 5 H(+)(out). Functionally, produces ATP from ADP in the presence of a proton gradient across the membrane. The catalytic sites are hosted primarily by the beta subunits. This is ATP synthase subunit beta from Pseudomonas entomophila (strain L48).